The following is a 500-amino-acid chain: Probable glycine dehydrogenase (decarboxylating) subunit 2 (500 aa).

N6-(pyridoxal phosphate)lysine is present on Lys-273.

The protein belongs to the GcvP family. C-terminal subunit subfamily. In terms of assembly, the glycine cleavage system is composed of four proteins: P, T, L and H. In this organism, the P 'protein' is a heterodimer of two subunits. It depends on pyridoxal 5'-phosphate as a cofactor.

The catalysed reaction is N(6)-[(R)-lipoyl]-L-lysyl-[glycine-cleavage complex H protein] + glycine + H(+) = N(6)-[(R)-S(8)-aminomethyldihydrolipoyl]-L-lysyl-[glycine-cleavage complex H protein] + CO2. In terms of biological role, the glycine cleavage system catalyzes the degradation of glycine. The P protein binds the alpha-amino group of glycine through its pyridoxal phosphate cofactor; CO(2) is released and the remaining methylamine moiety is then transferred to the lipoamide cofactor of the H protein. The polypeptide is Probable glycine dehydrogenase (decarboxylating) subunit 2 (Rhodopirellula baltica (strain DSM 10527 / NCIMB 13988 / SH1)).